The chain runs to 148 residues: Large ribosomal subunit protein uL15 (148 aa).

Basic residues predominate over residues 1–30 (MSTHKKKTRKLRGHVSHGHGRIGKHRKHPG). The disordered stretch occupies residues 1–37 (MSTHKKKTRKLRGHVSHGHGRIGKHRKHPGGRGNAGG).

Belongs to the universal ribosomal protein uL15 family.

This Tenebrio molitor (Yellow mealworm beetle) protein is Large ribosomal subunit protein uL15 (RpL27A).